A 517-amino-acid polypeptide reads, in one-letter code: Ribose import ATP-binding protein RbsA 2 (517 aa).

ABC transporter domains follow at residues leucine 11–aspartate 251 and tyrosine 263–threonine 507. Glycine 43–serine 50 contacts ATP.

The protein belongs to the ABC transporter superfamily. Ribose importer (TC 3.A.1.2.1) family. As to quaternary structure, the complex is composed of an ATP-binding protein (RbsA), two transmembrane proteins (RbsC) and a solute-binding protein (RbsB).

The protein resides in the cell inner membrane. It carries out the reaction D-ribose(out) + ATP + H2O = D-ribose(in) + ADP + phosphate + H(+). Its function is as follows. Part of the ABC transporter complex RbsABC involved in ribose import. Responsible for energy coupling to the transport system. In Burkholderia pseudomallei (strain 1710b), this protein is Ribose import ATP-binding protein RbsA 2.